A 1283-amino-acid chain; its full sequence is Peroxisomal ATPase PEX1 (1283 aa).

Residues 346 to 367 (SKTKQNVLSPEKEKQMSEPLDQ) are disordered. Ser354 is subject to Phosphoserine. Over residues 355–367 (PEKEKQMSEPLDQ) the composition is skewed to basic and acidic residues. ATP contacts are provided by residues 599-606 (GGKGSGKS) and 881-888 (GPPGTGKT). Phosphoserine occurs at positions 1181, 1209, and 1211. The interval 1260-1283 (FQNPKRRKNQSGTMFRPGQKVTLA) is disordered.

The protein belongs to the AAA ATPase family. As to quaternary structure, homooligomer; homooligomerizes in the cytosol, interaction with PEX6 promotes dissociation of the homooligomer. Interacts with PEX6; forming the PEX1-PEX6 AAA ATPase complex, which is composed of a heterohexamer formed by a trimer of PEX1-PEX6 dimers. Interacts indirectly with PEX26, via its interaction with PEX6.

Its subcellular location is the cytoplasm. The protein localises to the cytosol. It localises to the peroxisome membrane. It carries out the reaction ATP + H2O = ADP + phosphate + H(+). In terms of biological role, component of the PEX1-PEX6 AAA ATPase complex, a protein dislocase complex that mediates the ATP-dependent extraction of the PEX5 receptor from peroxisomal membranes, an essential step for PEX5 recycling. Specifically recognizes PEX5 monoubiquitinated at 'Cys-11', and pulls it out of the peroxisome lumen through the PEX2-PEX10-PEX12 retrotranslocation channel. Extraction by the PEX1-PEX6 AAA ATPase complex is accompanied by unfolding of the TPR repeats and release of bound cargo from PEX5. The sequence is that of Peroxisomal ATPase PEX1 from Homo sapiens (Human).